Here is a 103-residue protein sequence, read N- to C-terminus: MKIRKGDTVIVISGPDKGAKGKVIEAYPKRDKVLVEGVNRIKKHVANSAPERGAESGGIVTQEAPIHVSNVMVIDSDGNPTRIGYRFEDGKKIRVSKRNGKDI.

Belongs to the universal ribosomal protein uL24 family. Part of the 50S ribosomal subunit.

In terms of biological role, one of two assembly initiator proteins, it binds directly to the 5'-end of the 23S rRNA, where it nucleates assembly of the 50S subunit. One of the proteins that surrounds the polypeptide exit tunnel on the outside of the subunit. The sequence is that of Large ribosomal subunit protein uL24 from Corynebacterium urealyticum (strain ATCC 43042 / DSM 7109).